Here is a 530-residue protein sequence, read N- to C-terminus: Structure-specific endonuclease subunit SLX1 homolog 2 (530 aa).

The GIY-YIG domain occupies 4–89 (RFHCVYLLTS…PTKSTRLKTQ (86 aa)). The SLX1-type zinc-finger motif lies at 232–365 (CALCSLPLRS…PSQPCPCPLC (134 aa)). 3 disordered regions span residues 276-306 (ATMGQSTRNERSGEYSNKIKDDSNDGTMDAH), 410-438 (NSSLTERKSRRKAKPALGQKRNRGEYCGD), and 474-502 (LPPSGDEGYACDSSRRGVGGSKHTTRMTD). The span at 283 to 298 (RNERSGEYSNKIKDDS) shows a compositional bias: basic and acidic residues.

Belongs to the SLX1 family. Forms a heterodimer with a member of the SLX4 family. A divalent metal cation serves as cofactor.

It localises to the nucleus. Its function is as follows. Catalytic subunit of a heterodimeric structure-specific endonuclease that resolves DNA secondary structures generated during DNA repair and recombination. Has endonuclease activity towards branched DNA substrates, introducing single-strand cuts in duplex DNA close to junctions with ss-DNA. The sequence is that of Structure-specific endonuclease subunit SLX1 homolog 2 from Trypanosoma cruzi (strain CL Brener).